Reading from the N-terminus, the 473-residue chain is Photosystem II CP43 reaction center protein (473 aa).

The propeptide occupies 1 to 14 (MKTLYSLRRFYHVE). Threonine 15 carries the post-translational modification N-acetylthreonine. Phosphothreonine is present on threonine 15. 5 consecutive transmembrane segments (helical) span residues 69–93 (LFEV…PHLA), 134–155 (LLGP…KDRN), 178–200 (KALY…RKIT), 255–275 (KPFA…LSYS), and 291–312 (WFNN…ASQA). Glutamate 367 is a binding site for [CaMn4O5] cluster. The helical transmembrane segment at 447–471 (RARAAAAGFEKGIDRDFEPVLSMTP) threads the bilayer.

Belongs to the PsbB/PsbC family. PsbC subfamily. As to quaternary structure, PSII is composed of 1 copy each of membrane proteins PsbA, PsbB, PsbC, PsbD, PsbE, PsbF, PsbH, PsbI, PsbJ, PsbK, PsbL, PsbM, PsbT, PsbX, PsbY, PsbZ, Psb30/Ycf12, at least 3 peripheral proteins of the oxygen-evolving complex and a large number of cofactors. It forms dimeric complexes. Binds multiple chlorophylls and provides some of the ligands for the Ca-4Mn-5O cluster of the oxygen-evolving complex. It may also provide a ligand for a Cl- that is required for oxygen evolution. PSII binds additional chlorophylls, carotenoids and specific lipids. serves as cofactor.

The protein resides in the plastid. It localises to the chloroplast thylakoid membrane. One of the components of the core complex of photosystem II (PSII). It binds chlorophyll and helps catalyze the primary light-induced photochemical processes of PSII. PSII is a light-driven water:plastoquinone oxidoreductase, using light energy to abstract electrons from H(2)O, generating O(2) and a proton gradient subsequently used for ATP formation. This Nicotiana tabacum (Common tobacco) protein is Photosystem II CP43 reaction center protein.